The primary structure comprises 593 residues: UvrABC system protein C (593 aa).

Residues 13 to 91 enclose the GIY-YIG domain; it reads TTPGVYMMKD…IKEYRPKYNV (79 aa). A UVR domain is found at 202–237; sequence DEIVEELKKKMFEYADNLMFEKAQEIKNKITSLEQI.

This sequence belongs to the UvrC family. Interacts with UvrB in an incision complex.

It is found in the cytoplasm. Its function is as follows. The UvrABC repair system catalyzes the recognition and processing of DNA lesions. UvrC both incises the 5' and 3' sides of the lesion. The N-terminal half is responsible for the 3' incision and the C-terminal half is responsible for the 5' incision. In Caldicellulosiruptor saccharolyticus (strain ATCC 43494 / DSM 8903 / Tp8T 6331), this protein is UvrABC system protein C.